The following is a 247-amino-acid chain: Carboxy-S-adenosyl-L-methionine synthase (247 aa).

Residues tyrosine 39, glycine 64–serine 66, aspartate 89–asparagine 90, aspartate 117–isoleucine 118, asparagine 132, and arginine 199 each bind S-adenosyl-L-methionine.

This sequence belongs to the class I-like SAM-binding methyltransferase superfamily. Cx-SAM synthase family. In terms of assembly, homodimer.

It catalyses the reaction prephenate + S-adenosyl-L-methionine = carboxy-S-adenosyl-L-methionine + 3-phenylpyruvate + H2O. Its function is as follows. Catalyzes the conversion of S-adenosyl-L-methionine (SAM) to carboxy-S-adenosyl-L-methionine (Cx-SAM). This Salmonella agona (strain SL483) protein is Carboxy-S-adenosyl-L-methionine synthase.